The following is a 279-amino-acid chain: Phosphate-binding protein PstS (279 aa).

An N-terminal signal peptide occupies residues 1–18; it reads MKKVIILIFMLSTSLLYN. Cys19 carries N-palmitoyl cysteine lipidation. The S-diacylglycerol cysteine moiety is linked to residue Cys19. Phosphate-binding positions include 33-35, Ser63, and 151-153; these read STT and SGS.

It belongs to the PstS family. As to quaternary structure, monomer (in vitro). The complex is composed of two ATP-binding proteins (PstB), two transmembrane proteins (PstC and PstA) and a solute-binding protein (PstS).

Its subcellular location is the cell membrane. Binds inorganic phosphate with a Kd of 1.2 uM. Part of the ABC transporter complex PstSACB involved in phosphate import. This Borreliella burgdorferi (strain ATCC 35210 / DSM 4680 / CIP 102532 / B31) (Borrelia burgdorferi) protein is Phosphate-binding protein PstS.